Consider the following 42-residue polypeptide: Hemoglobin subunit beta-A (42 aa).

Positions 2 to 42 constitute a Globin domain; that stretch reads EWTDAERSAILSLWGKIDTDELGPALLARLXLVXXXTQRYF.

The protein belongs to the globin family. Heterotetramer of two alpha chains and two beta chains. In terms of tissue distribution, red blood cells.

Involved in oxygen transport from gills to the various peripheral tissues. The sequence is that of Hemoglobin subunit beta-A from Catostomus clarkii (Desert sucker).